The sequence spans 251 residues: Protein unc-119 homolog B (251 aa).

A compositionally biased stretch (polar residues) spans 1-13 (MSGSNPKAATAGS). Residues 1 to 56 (MSGSNPKAATAGSQAGPGGLVAGKEEKKKAGGGVLNRLKARRQGPPHTPDDGSGAA) form a disordered region. S2 carries the post-translational modification N-acetylserine. The residue at position 24 (K24) is an N6-acetyllysine. Residue Y142 coordinates tetradecanoate.

This sequence belongs to the PDE6D/unc-119 family. Found in a complex with ARL3, RP2 and UNC119B; RP2 induces hydrolysis of GTP ARL3 in the complex, leading to the release of UNC119B. Interacts with NPHP3 (when myristoylated). Interacts with CYS1 (when myristoylated). Interacts with MACIR; interaction only takes place when UNC119B is not liganded with myristoylated proteins.

It localises to the cell projection. The protein resides in the cilium. Functionally, myristoyl-binding protein that acts as a cargo adapter: specifically binds the myristoyl moiety of a subset of N-terminally myristoylated proteins and is required for their localization. Binds myristoylated NPHP3 and plays a key role in localization of NPHP3 to the primary cilium membrane. Does not bind all myristoylated proteins. Probably plays a role in trafficking proteins in photoreceptor cells. The polypeptide is Protein unc-119 homolog B (Unc119b) (Mus musculus (Mouse)).